The chain runs to 268 residues: Non-homologous end joining protein Ku (268 aa).

Residues V13 to N175 form the Ku domain. The disordered stretch occupies residues R174–S194.

Belongs to the prokaryotic Ku family. As to quaternary structure, homodimer. Interacts with LigD.

Functionally, with LigD forms a non-homologous end joining (NHEJ) DNA repair enzyme, which repairs dsDNA breaks with reduced fidelity. Binds linear dsDNA with 5'- and 3'- overhangs but not closed circular dsDNA nor ssDNA. Recruits and stimulates the ligase activity of LigD. In Gluconacetobacter diazotrophicus (strain ATCC 49037 / DSM 5601 / CCUG 37298 / CIP 103539 / LMG 7603 / PAl5), this protein is Non-homologous end joining protein Ku.